Here is a 732-residue protein sequence, read N- to C-terminus: Probable boron transporter 3 (732 aa).

Met-1 carries the N-acetylmethionine modification. The Cytoplasmic portion of the chain corresponds to 1–37; it reads MDEAESFVPFQGIKKDVKGRLNCYKQDWISGLRAGFR. A helical membrane pass occupies residues 38–58; the sequence is ILAPTTYIFFASAIPVITFGE. Over 59–77 the chain is Extracellular; sequence QLERDTDGKITAVQTLVST. The helical transmembrane segment at 78-98 threads the bilayer; that stretch reads ALCGVIHSIIGGQPLLILGVA. Over 99 to 123 the chain is Cytoplasmic; that stretch reads EPTVIMYTFMFNFAKSRTDLGSNLF. The chain crosses the membrane as a helical span at residues 124–144; that stretch reads LAWTGWVCLWTGLLLFLLAVL. At 145-157 the chain is on the extracellular side; that stretch reads GACTFINRFTRLA. Residues 158 to 178 traverse the membrane as a helical segment; that stretch reads GELFGILIAMLFMQEAIRGIV. Residues 179–197 are Cytoplasmic-facing; the sequence is DEFGVPGRTNPRSAEFQPA. The helical transmembrane segment at 198–218 threads the bilayer; sequence WVFANGMFGLVLSSGLLYTGL. Over 219–234 the chain is Extracellular; that stretch reads KSRKARSWRFGAEWLR. The helical transmembrane segment at 235-255 threads the bilayer; it reads GFIADYGVPVMVVVWTCISYI. Residues 256-291 lie on the Cytoplasmic side of the membrane; it reads PWKSVPQGIPRRLVSPNPWSPGAYQNWTVIKEMVDV. Residues 292–312 form a helical membrane-spanning segment; the sequence is PVLYILLAVVPASMIAVLYYF. Residues 313–339 lie on the Extracellular side of the membrane; that stretch reads DHSVASQLAQQEDFNLRKPPAYHYDLF. A helical membrane pass occupies residues 340–360; it reads LLGFLTILCGLIGIPPSNGVI. Topologically, residues 361–463 are cytoplasmic; it reads PQSPMHTKSL…ILPVEVKEQR (103 aa). The chain crosses the membrane as a helical span at residues 464–484; it reads VSNFLQAMMVAGCVAAMPLIK. The Extracellular segment spans residues 485 to 556; that stretch reads RIPSSVLWGY…LFQTAYLLVC (72 aa). A helical membrane pass occupies residues 557-577; sequence FGITWVPVAGVLFPLMIMFLV. The Cytoplasmic segment spans residues 578-732; the sequence is PVRQYVLPNF…QRLSNLGKSV (155 aa). The tract at residues 695-732 is disordered; sequence GGGEISPRSSAGRAPFSPRSATGGGGGEQRLSNLGKSV.

This sequence belongs to the anion exchanger (TC 2.A.31.3) family.

Its subcellular location is the membrane. Probable boron transporter. Boron is essential for maintaining the integrity of plants cell walls. In Arabidopsis thaliana (Mouse-ear cress), this protein is Probable boron transporter 3 (BOR3).